Consider the following 411-residue polypeptide: Putative ion-transport protein YfeO (411 aa).

A run of 11 helical transmembrane segments spans residues 9-29, 54-74, 99-119, 149-169, 186-206, 223-243, 258-278, 296-316, 322-342, 343-363, and 386-406; these read MLLLSLPALIIGVASSLVLIA, DSPFWIVGMLTLTGIVVGLII, ALPGLLLALIIGLAGGVSLGP, ILASAGTIGALFGTPVAAALI, LFAPLMAAAAGSLTTSLFFHP, IASGAIVAAIAIAAGMVAVWC, VLILGIGGFILGILGVIGGPL, LGAGDYFTLAAVKLAALVIAA, GGRIFPAVFIGAALGLMLHAH, VEAVPAAITVSCAILGLVLVV, and LLCIVMLPAWLLLAGKPLLAA.

This sequence belongs to the chloride channel (TC 2.A.49) family.

Its subcellular location is the cell membrane. In Salmonella schwarzengrund (strain CVM19633), this protein is Putative ion-transport protein YfeO.